A 581-amino-acid polypeptide reads, in one-letter code: Zinc finger protein 674 (581 aa).

The 72-residue stretch at 8–79 (LTFKDVFVDF…DGGTPVRTCA (72 aa)) folds into the KRAB domain. 4 C2H2-type zinc fingers span residues 224 to 246 (YKCT…QRTH), 252 to 274 (YECC…QRTH), 280 to 302 (YECS…QRTH), and 308 to 330 (FVCD…EKTH). Positions 357-371 (PQCSEHGKASDEKPS) are enriched in basic and acidic residues. The tract at residues 357–377 (PQCSEHGKASDEKPSPTKHWR) is disordered. 7 C2H2-type zinc fingers span residues 385-407 (YECS…QRIH), 413-435 (YECS…HRTH), 441-463 (YECR…QRMH), 469-491 (YKCN…QRIH), 497-519 (YECT…QRIH), 525-547 (YKCS…HRTH), and 553-575 (YECR…QRSH).

Belongs to the krueppel C2H2-type zinc-finger protein family. In terms of tissue distribution, expressed in testis.

It localises to the nucleus. May be involved in transcriptional regulation. The protein is Zinc finger protein 674 (ZNF674) of Homo sapiens (Human).